We begin with the raw amino-acid sequence, 217 residues long: Adenylate kinase (217 aa).

Gly10 to Thr15 is a binding site for ATP. The interval Ser30 to Val59 is NMP. AMP contacts are provided by residues Thr31, Arg36, Leu57–Val59, Gly85–Arg88, and Gln92. The tract at residues Gly126 to Asp163 is LID. ATP is bound at residue Arg127. 2 residues coordinate Zn(2+): Cys130 and Cys133. Thr136–Tyr137 contacts ATP. 2 residues coordinate Zn(2+): Cys150 and Cys153. Positions 160 and 171 each coordinate AMP. Lys199 lines the ATP pocket.

This sequence belongs to the adenylate kinase family. Monomer.

It is found in the cytoplasm. The enzyme catalyses AMP + ATP = 2 ADP. It functions in the pathway purine metabolism; AMP biosynthesis via salvage pathway; AMP from ADP: step 1/1. Functionally, catalyzes the reversible transfer of the terminal phosphate group between ATP and AMP. Plays an important role in cellular energy homeostasis and in adenine nucleotide metabolism. This chain is Adenylate kinase, found in Thermoanaerobacter pseudethanolicus (strain ATCC 33223 / 39E) (Clostridium thermohydrosulfuricum).